A 620-amino-acid polypeptide reads, in one-letter code: MAAAATPGAKRPADPARDPDSPPKRPRPNSLDLATVFGPRPAPPRPTSPGAPGSHWPQSPPRGQPDGGAPGEKARPASPALSEASSGPPTPDIPLSPGGAHAIDPDCSPGPPDPDPMWSASAIPNALPPHILAETFERHLRGLLRGVRSPLAIGPLWARLDYLCSLVVSLEAAGMVDRGLGRHLWRLTRRAPPSAAEAVAPRPLMGFYEAATQNQADCQLWALLRRGLTTASTLRWGAQGPCFSSQWLTHNASLRLDAQSSAVMFGRVNEPTARNLLFRYCVGRADAGVNDDADAGRFVFHQPGDLAEENVHACGVLMDGHTGMVGASLDILVCPRDPHGYLAPAPQTPLAFYEVKCRAKYAFDPADPGAPAASAYEDLMARRSPEAFRAFIRSIPNPGVRYFAPGRVPGPEEALVTQDRDWLDSRAAGEKRRCSAPDRALVELNSGVVSEVLLFGVPDLERRTISPVAWSSGELVRREPIFANPRHPNFKQILVQGYVLDSHFPDCPLQPHLVTFLGRHRAGAEEGVTFRLEDGRGAPAGRGGAPGPAKASILPDQAVPIALIITPVRVEPGIYRDIRRNSRLAFDDTLAKLWASRSPGRGPAAADTTSSPPTAGRSSR.

Over residues 1–10 (MAAAATPGAK) the composition is skewed to low complexity. 2 disordered regions span residues 1–122 (MAAA…SASA) and 595–620 (ASRS…RSSR). The span at 11 to 23 (RPADPARDPDSPP) shows a compositional bias: basic and acidic residues. The segment covering 40 to 49 (RPAPPRPTSP) has biased composition (pro residues). A compositionally biased stretch (low complexity) spans 603-620 (PAAADTTSSPPTAGRSSR).

This sequence belongs to the herpesviridae alkaline nuclease family. In terms of assembly, interacts with major DNA-binding protein; this interaction increases the nuclease processivity of the alkaline exonuclease.

The protein resides in the host nucleus. The protein localises to the host cytoplasm. In terms of biological role, plays a role in processing non linear or branched viral DNA intermediates in order to promote the production of mature packaged unit-length linear progeny viral DNA molecules. Exhibits endonuclease and exonuclease activities and accepts both double-stranded and single-stranded DNA as substrate. Exonuclease digestion of DNA is in the 5'-&gt; 3' direction and the products are 5'-monophosphate nucleosides. Additionally, forms a recombinase with the major DNA-binding protein, which displays strand exchange activity. This chain is Alkaline nuclease, found in Homo sapiens (Human).